We begin with the raw amino-acid sequence, 1194 residues long: ATP-dependent RNA helicase DHX30 (1194 aa).

Positions 1–10 are enriched in basic and acidic residues; that stretch reads MFTLDSFRKD. The disordered stretch occupies residues 1-27; it reads MFTLDSFRKDRTQHRQRQCKLPPPRLP. S6 carries the post-translational modification Phosphoserine. One can recognise a DRBM domain in the interval 53–121; the sequence is PKNLLNSVIG…QAAAAACQLF (69 aa). A disordered region spans residues 153 to 200; that stretch reads WWRPEPTMPPTSWRQLNPENIRPAGTGGLSRSLGREEEEDEEEELEEG. Acidic residues predominate over residues 188-200; sequence EEEEDEEEELEEG. A phosphoserine mark is found at S226 and S380. A Helicase ATP-binding domain is found at 444–612; the sequence is LSAIEQHPVV…FGGCPVIKVP (169 aa). Position 457–464 (457–464) interacts with ATP; sequence GDTGCGKT. Positions 559-562 match the DEAH box motif; sequence DEVH. A Helicase C-terminal domain is found at 654–827; sequence LVTDLVLHID…NLVLQAKIHM (174 aa).

It belongs to the DEAD box helicase family. DEAH subfamily. In terms of assembly, identified in a complex with TFAM and SSBP1. Interacts (via N-terminus) with ZC3HAV1 (via N-terminal domain) in an RNA-independent manner. Found in a complex with GRSF1, DDX28, FASTKD2 and FASTKD5.

Its subcellular location is the cytoplasm. The protein localises to the mitochondrion. It localises to the mitochondrion matrix. It is found in the mitochondrion nucleoid. The enzyme catalyses ATP + H2O = ADP + phosphate + H(+). In terms of biological role, RNA-dependent helicase. Plays an important role in the assembly of the mitochondrial large ribosomal subunit. Associates with mitochondrial DNA. Required for optimal function of the zinc-finger antiviral protein ZC3HAV1. Involved in nervous system development and differentiation through its involvement in the up-regulation of a number of genes which are required for neurogenesis, including GSC, NCAM1, neurogenin, and NEUROD. The sequence is that of ATP-dependent RNA helicase DHX30 (Dhx30) from Rattus norvegicus (Rat).